Consider the following 288-residue polypeptide: Bifunctional protein FolD (288 aa).

Residues 166-168 (GAS) and Ile232 each bind NADP(+).

Belongs to the tetrahydrofolate dehydrogenase/cyclohydrolase family. As to quaternary structure, homodimer.

The catalysed reaction is (6R)-5,10-methylene-5,6,7,8-tetrahydrofolate + NADP(+) = (6R)-5,10-methenyltetrahydrofolate + NADPH. It catalyses the reaction (6R)-5,10-methenyltetrahydrofolate + H2O = (6R)-10-formyltetrahydrofolate + H(+). It participates in one-carbon metabolism; tetrahydrofolate interconversion. In terms of biological role, catalyzes the oxidation of 5,10-methylenetetrahydrofolate to 5,10-methenyltetrahydrofolate and then the hydrolysis of 5,10-methenyltetrahydrofolate to 10-formyltetrahydrofolate. This Erwinia tasmaniensis (strain DSM 17950 / CFBP 7177 / CIP 109463 / NCPPB 4357 / Et1/99) protein is Bifunctional protein FolD.